A 41-amino-acid chain; its full sequence is Alpha-conotoxin CIB (41 aa).

Residues 1–21 (SDGRNEAANDEASDVIELALK) constitute a propeptide that is removed on maturation. 2 disulfide bridges follow: Cys23–Cys29 and Cys24–Cys37. The interval 25–27 (SNP) is ser-Xaa-Pro motif, crucial for potent interaction with nAChR. Residue Cys37 is modified to Cysteine amide.

The protein belongs to the conotoxin A superfamily. As to expression, expressed by the venom duct.

It is found in the secreted. Alpha-conotoxins act on postsynaptic membranes, they bind to the nicotinic acetylcholine receptors (nAChR) and thus inhibit them. This toxin blocks rat neuronal nAChR alpha-3-beta-2/CHRNA3-CHRNB2 (IC(50)=128.9 nM) and alpha-7/CHRNA7 (IC(50)=1511 nM). In vivo, intramuscular injection into zebrafish does not produce any effect on the locomotion of zebrafish. The protein is Alpha-conotoxin CIB of Conus catus (Cat cone).